Reading from the N-terminus, the 319-residue chain is HPr kinase/phosphorylase (319 aa).

Catalysis depends on residues histidine 144 and lysine 165. ATP is bound at residue 159–166 (GKSGIGKS). Serine 166 is a binding site for Mg(2+). Aspartate 183 acts as the Proton acceptor; for phosphorylation activity. Proton donor; for dephosphorylation activity in catalysis. Residues 207 to 216 (MEIRGLGVIN) form an important for the catalytic mechanism of both phosphorylation and dephosphorylation region. Residue glutamate 208 participates in Mg(2+) binding. The active site involves arginine 249. Positions 270-275 (PVRPGR) are important for the catalytic mechanism of dephosphorylation.

This sequence belongs to the HPrK/P family. As to quaternary structure, homohexamer. Mg(2+) serves as cofactor.

The catalysed reaction is [HPr protein]-L-serine + ATP = [HPr protein]-O-phospho-L-serine + ADP + H(+). It carries out the reaction [HPr protein]-O-phospho-L-serine + phosphate + H(+) = [HPr protein]-L-serine + diphosphate. Catalyzes the ATP- as well as the pyrophosphate-dependent phosphorylation of a specific serine residue in HPr, a phosphocarrier protein of the phosphoenolpyruvate-dependent sugar phosphotransferase system (PTS). HprK/P also catalyzes the pyrophosphate-producing, inorganic phosphate-dependent dephosphorylation (phosphorolysis) of seryl-phosphorylated HPr (P-Ser-HPr). The chain is HPr kinase/phosphorylase from Geobacter sulfurreducens (strain ATCC 51573 / DSM 12127 / PCA).